We begin with the raw amino-acid sequence, 298 residues long: Tyrosine recombinase XerC (298 aa).

One can recognise a Core-binding (CB) domain in the interval 2–88 (TDLHTDVERY…ALRSFFDWLV (87 aa)). Residues 109-288 (HLPKNIDVDD…DFQHLASVYD (180 aa)) enclose the Tyr recombinase domain. Residues arginine 148, lysine 172, histidine 240, arginine 243, and histidine 266 contribute to the active site. The active-site O-(3'-phospho-DNA)-tyrosine intermediate is tyrosine 275.

This sequence belongs to the 'phage' integrase family. XerC subfamily. As to quaternary structure, forms a cyclic heterotetrameric complex composed of two molecules of XerC and two molecules of XerD, in which XerC interacts with XerD via its C-terminal region, XerD interacts with XerC via its C-terminal region and so on.

The protein resides in the cytoplasm. With respect to regulation, ftsK may regulate the catalytic switch between XerC and XerD in the heterotetrameric complex during the two steps of the recombination process. Site-specific tyrosine recombinase, which acts by catalyzing the cutting and rejoining of the recombining DNA molecules. Binds cooperatively to specific DNA consensus sequences that are separated from XerD binding sites by a short central region, forming the heterotetrameric XerC-XerD complex that recombines DNA substrates. The complex is essential to convert dimers of the bacterial chromosome into monomers to permit their segregation at cell division. It also contributes to the segregational stability of plasmids. In the complex XerC specifically exchanges the top DNA strands. This Escherichia coli O45:K1 (strain S88 / ExPEC) protein is Tyrosine recombinase XerC.